A 524-amino-acid polypeptide reads, in one-letter code: Serine/threonine-protein phosphatase 2A 56 kDa regulatory subunit gamma isoform (524 aa).

Residue M1 is modified to N-acetylmethionine. Positions 472–489 (RKTVSDEARQAQKDPKKE) match the Nuclear localization signal motif. The interval 476-524 (SDEARQAQKDPKKERPLARRKSELPQDPHTKKALEAHCRADELVPQDGR) is disordered.

Belongs to the phosphatase 2A regulatory subunit B56 family. In terms of assembly, PP2A consists of a common heterodimeric core enzyme, composed of PPP2CA a 36 kDa catalytic subunit (subunit C) and PPP2R1A a 65 kDa constant regulatory subunit (PR65 or subunit A), that associates with a variety of regulatory subunits. Proteins that associate with the core dimer include three families of regulatory subunits B (the R2/B/PR55/B55, R3/B''/PR72/PR130/PR59 and R5/B'/B56 families), the 48 kDa variable regulatory subunit, viral proteins, and cell signaling molecules. Interacts with SGO1. Interacts with SGO1; the interaction is direct. May interact with TP53. Interacts with IER3 and/or ERK kinases; regulates ERK dephosphorylation Interacts with CIP2A; this interaction stabilizes CIP2A. Highly expressed in testis, heart and spleen. Also found in brain and skeletal muscle.

The protein resides in the nucleus. The protein localises to the chromosome. It is found in the centromere. Its function is as follows. The B regulatory subunit might modulate substrate selectivity and catalytic activity, and might also direct the localization of the catalytic enzyme to a particular subcellular compartment. The PP2A-PPP2R5C holoenzyme may activate TP53 and play a role in DNA damage-induced inhibition of cell proliferation. PP2A-PPP2R5C may also regulate the ERK signaling pathway through ERK dephosphorylation. In Oryctolagus cuniculus (Rabbit), this protein is Serine/threonine-protein phosphatase 2A 56 kDa regulatory subunit gamma isoform (PPP2R5C).